Reading from the N-terminus, the 214-residue chain is Reticulon-3-A (214 aa).

The disordered stretch occupies residues 1–21; that stretch reads MAETSGPQSSHISSSSVGEKG. Residues 26-214 enclose the Reticulon domain; that stretch reads VRDLLYWRDV…LPGALKKKSE (189 aa). Transmembrane regions (helical) follow at residues 46-66 and 155-175; these read MVLL…YLVL and VFNG…APIV.

As to quaternary structure, homodimer. As to expression, expressed in the animal hemisphere at the four-cell stage. During gastrulation, expression becomes restricted to the prospective neuroectoderm. At the early tail bud stage, expressed in the head structure. At the tadpole stage, expressed in head and neural tissues including the otic vesicle and optic nerve.

The protein resides in the endoplasmic reticulum membrane. It is found in the golgi apparatus membrane. Its function is as follows. May be involved in membrane trafficking in the early secretory pathway. The protein is Reticulon-3-A (rtn3-a) of Xenopus laevis (African clawed frog).